Reading from the N-terminus, the 858-residue chain is Zinc finger protein ZXDC (858 aa).

Disordered regions lie at residues M1–S73, D85–A108, and A142–A175. A compositionally biased stretch (pro residues) spans A59–E68. Over residues A142 to P152 the composition is skewed to low complexity. 10 consecutive C2H2-type zinc fingers follow at residues Y176–H200, F209–H233, F239–H263, F269–H291, Y298–H322, F329–H353, F359–H383, F389–H413, F419–H443, and S452–H477. Polar residues predominate over residues D624–L634. The interval D624–S652 is disordered. The segment covering T635–G651 has biased composition (low complexity). Residue K661 forms a Glycyl lysine isopeptide (Lys-Gly) (interchain with G-Cter in SUMO) linkage. Disordered stretches follow at residues D671–G714 and V727–G751. Residues G681–E692 are compositionally biased toward polar residues.

Belongs to the ZXD family. Self-associates. Interacts with ZXDB and CIITA. Post-translationally, sumoylated at Lys-661 with SUMO1, SUMO2 and SUMO3; sumoylation enhances the activity of the transcriptional activation domain.

The protein localises to the nucleus. In terms of biological role, cooperates with CIITA to promote transcription of MHC class I and MHC class II genes. The protein is Zinc finger protein ZXDC (Zxdc) of Mus musculus (Mouse).